We begin with the raw amino-acid sequence, 960 residues long: Phosphoenolpyruvate carboxylase 2 (960 aa).

Residues His-167 and Lys-595 contribute to the active site.

The protein belongs to the PEPCase type 1 family. In terms of assembly, homotetramer. The cofactor is Mg(2+).

Its subcellular location is the cytoplasm. The catalysed reaction is oxaloacetate + phosphate = phosphoenolpyruvate + hydrogencarbonate. Its pathway is photosynthesis; C3 acid pathway. Through the carboxylation of phosphoenolpyruvate (PEP) it forms oxaloacetate, a four-carbon dicarboxylic acid source for the tricarboxylic acid cycle. The protein is Phosphoenolpyruvate carboxylase 2 of Sorghum bicolor (Sorghum).